The chain runs to 366 residues: Ribosomal RNA large subunit methyltransferase M (366 aa).

Residues Ser188, 221 to 224, Asp240, Asp260, and Asp277 each bind S-adenosyl-L-methionine; that span reads CPGG. Lys306 acts as the Proton acceptor in catalysis.

This sequence belongs to the class I-like SAM-binding methyltransferase superfamily. RNA methyltransferase RlmE family. RlmM subfamily. In terms of assembly, monomer.

The protein resides in the cytoplasm. It catalyses the reaction cytidine(2498) in 23S rRNA + S-adenosyl-L-methionine = 2'-O-methylcytidine(2498) in 23S rRNA + S-adenosyl-L-homocysteine + H(+). Catalyzes the 2'-O-methylation at nucleotide C2498 in 23S rRNA. This chain is Ribosomal RNA large subunit methyltransferase M, found in Escherichia coli O45:K1 (strain S88 / ExPEC).